We begin with the raw amino-acid sequence, 312 residues long: Protoheme IX farnesyltransferase 1 (312 aa).

The next 9 membrane-spanning stretches (helical) occupy residues 21–41 (GVLAAYLALTKPRVIELLLVT), 53–73 (IPSPWLVLVTLAGGAMSAGSA), 105–125 (SALVFGIVLGVVSFAVLALGA), 127–147 (LLAAVLSLAAILFYVFVYTLV), 156–176 (IVWGGAAGCMPVVIGWAAVTG), 182–202 (ALVMFGVVFLWTPPHFWSLAM), 225–245 (VSARILVYSWATVACTLLLVP), 246–266 (ATSWVYVAFAVLAGAAFLIVA), and 292–312 (LALLFVAIAVDSAVGLPSFVA).

Belongs to the UbiA prenyltransferase family. Protoheme IX farnesyltransferase subfamily.

It localises to the cell membrane. It catalyses the reaction heme b + (2E,6E)-farnesyl diphosphate + H2O = Fe(II)-heme o + diphosphate. It participates in porphyrin-containing compound metabolism; heme O biosynthesis; heme O from protoheme: step 1/1. Its function is as follows. Converts heme B (protoheme IX) to heme O by substitution of the vinyl group on carbon 2 of heme B porphyrin ring with a hydroxyethyl farnesyl side group. This is Protoheme IX farnesyltransferase 1 from Saccharopolyspora erythraea (strain ATCC 11635 / DSM 40517 / JCM 4748 / NBRC 13426 / NCIMB 8594 / NRRL 2338).